Here is a 433-residue protein sequence, read N- to C-terminus: Serine hydroxymethyltransferase (433 aa).

(6S)-5,6,7,8-tetrahydrofolate is bound by residues Leu-132 and 136-138; that span reads GHL. Lys-241 carries the post-translational modification N6-(pyridoxal phosphate)lysine.

Belongs to the SHMT family. In terms of assembly, homodimer. Requires pyridoxal 5'-phosphate as cofactor.

The protein localises to the cytoplasm. The catalysed reaction is (6R)-5,10-methylene-5,6,7,8-tetrahydrofolate + glycine + H2O = (6S)-5,6,7,8-tetrahydrofolate + L-serine. It functions in the pathway one-carbon metabolism; tetrahydrofolate interconversion. It participates in amino-acid biosynthesis; glycine biosynthesis; glycine from L-serine: step 1/1. Functionally, catalyzes the reversible interconversion of serine and glycine with tetrahydrofolate (THF) serving as the one-carbon carrier. This reaction serves as the major source of one-carbon groups required for the biosynthesis of purines, thymidylate, methionine, and other important biomolecules. Also exhibits THF-independent aldolase activity toward beta-hydroxyamino acids, producing glycine and aldehydes, via a retro-aldol mechanism. The polypeptide is Serine hydroxymethyltransferase (Rhodopseudomonas palustris (strain BisA53)).